We begin with the raw amino-acid sequence, 699 residues long: MTTLDQISTLTQPRHPDDWTEIDSAAVDTIRVLATDAVQKAGNGHPGTAMSLAPLAYTLFQRTLRHDPNDTAWLGRDRFVLSAGHSSLTLYIQLYLGGFGLELSDIESLRTWGSTTPGHPEFRHTKGVEITTGPLGQGLASAVGMAMASRYERGLFDPDAEPGASPFDHYIYVIASDGDIEEGVTSEASSLAAVQQLGNLIVFYDHNQISIEGDTKITLCEDTAARYRAYGWHVQEVEGGENVVGIEEAIANAKAATDRPSFISLRTIIGYPAPTLINTGKAHGAALGEDEVAATKRILGFDPDKTFAVREDVITHTRGLIARGKEAHERWQLEFEAWAQREPERKALLDRLLAQQLPDGWDADLPNWEPRSKELATRAASGAVLSAIGPKLPELWGGSADLAGSNNTTIKDVDSFGPPSISTDEYTAHWYGRTLHFGVREHAMGAILSGIVLHGPTRAYGGTFLQFSDYMRPSVRLASLMDIDTIYVWTHDSVGLGEDGPTHQPIEHLAALRAIPRLSVVRPADANETAYAWRTILARGANSGPVGLILTRQSVPVLEGTNTEGVARGGYVLGDGGSSEAKEPDVILIATGSEVQLAVAAQKLLADKDIIVRVVSMPCVEWFESQPYEYRDSVLPPSVSARVAVEAGVAQCWHKLVGDTGKIVSIEHYGESADYQTLFREYGFTPEAVVAAAEQVLDN.

Position 45 (His-45) interacts with substrate. Residues Thr-48, His-85, and 133 to 135 (GPL) contribute to the thiamine diphosphate site. Asp-177 contributes to the Mg(2+) binding site. 2 residues coordinate thiamine diphosphate: Gly-178 and Asn-207. Asn-207 and Ile-209 together coordinate Mg(2+). The substrate site is built by His-283, Arg-378, and Ser-405. His-283 contributes to the thiamine diphosphate binding site. Glu-441 acts as the Proton donor in catalysis. Position 467 (Phe-467) interacts with thiamine diphosphate. His-491, Asp-499, and Arg-552 together coordinate substrate.

It belongs to the transketolase family. As to quaternary structure, homodimer. Requires Mg(2+) as cofactor. Ca(2+) is required as a cofactor. Mn(2+) serves as cofactor. The cofactor is Co(2+). It depends on thiamine diphosphate as a cofactor.

The catalysed reaction is D-sedoheptulose 7-phosphate + D-glyceraldehyde 3-phosphate = aldehydo-D-ribose 5-phosphate + D-xylulose 5-phosphate. In terms of biological role, catalyzes the transfer of a two-carbon ketol group from a ketose donor to an aldose acceptor, via a covalent intermediate with the cofactor thiamine pyrophosphate. The polypeptide is Transketolase (tkt) (Mycobacterium leprae (strain TN)).